Consider the following 182-residue polypeptide: Troponin I, fast skeletal muscle (182 aa).

Gly-2 carries the post-translational modification N-acetylglycine. Positions 2–48 are involved in binding TNC; sequence GDEEKRNRAITARRQHLKSVMLQIAATELEKEESRRESEKQNYLSEH. Thr-12 carries the post-translational modification Phosphothreonine. Over residues 29 to 41 the composition is skewed to basic and acidic residues; the sequence is ELEKEESRRESEK. The disordered stretch occupies residues 29–53; it reads ELEKEESRRESEKQNYLSEHCPPLH. The tract at residues 97–117 is involved in binding TNC and actin; that stretch reads NQKLFDLRGKFKRPPLRRVRM. Ser-118 carries the phosphoserine modification.

The protein belongs to the troponin I family. As to quaternary structure, binds to actin and tropomyosin.

Functionally, troponin I is the inhibitory subunit of troponin, the thin filament regulatory complex which confers calcium-sensitivity to striated muscle actomyosin ATPase activity. The chain is Troponin I, fast skeletal muscle (Tnni2) from Rattus norvegicus (Rat).